A 428-amino-acid polypeptide reads, in one-letter code: Pregnancy-specific beta-1-glycoprotein 3 (428 aa).

An N-terminal signal peptide occupies residues Met1 to Ala34. Residues Gln35–Leu144 form the Ig-like V-type domain. Residues Asn104 and Asn111 are each glycosylated (N-linked (GlcNAc...) asparagine). Positions Arg127–Asp129 match the Cell attachment site motif. 3 Ig-like C2-type domains span residues Pro147–Asn234, Pro240–Asn327, and Pro335–Thr410. Intrachain disulfides connect Cys169/Cys217, Cys262/Cys310, and Cys354/Cys394. N-linked (GlcNAc...) asparagine glycans are attached at residues Asn268 and Asn303.

Belongs to the immunoglobulin superfamily. CEA family.

It localises to the secreted. This chain is Pregnancy-specific beta-1-glycoprotein 3 (PSG3), found in Homo sapiens (Human).